The following is a 530-amino-acid chain: Per os infectivity factor 1 (530 aa).

The N-terminal stretch at 1 to 15 (MHFAIILLFLLVIIA) is a signal peptide.

As to quaternary structure, forms the PIF complex together with PIF2 and PIF3. The complex also interacts with per os infectivity factor PIF0.

The protein localises to the virion membrane. Per os infectivity factor that mediates the specific binding of occluded virions (ODV) to the host midgut target cells. This chain is Per os infectivity factor 1, found in Autographa californica nuclear polyhedrosis virus (AcMNPV).